A 458-amino-acid polypeptide reads, in one-letter code: MLPSQSPAIFTVSRLNQTVRLLLEHEMGQVWISGEISNFTQPASGHWYFTLKDDTAQVRCAMFRNSNRRVTFRPQHGQQVLVRANITLYEPRGDYQIIVESMQPAGEGLLQQKYEQLKAKLQAEGLFELQYKKSLPSPAHCVGVITSKTGAALHDILHVLKRRDPSLPVIIYSTAVQGDDAPGQIVRAIELANKRNECDVLIVGRGGGSLEDLWSFNDERVARAIFASRIPIVSAVGHETDVTIADFVADLRAPTPSAAAEVVSRNQQELLRQVQSTRQRLEMAMDYYLANRTRRFTQIHHRLQQQHPQLRLARQQTMLERLQKRMSFALENQLKRAGQQQQRLTRQLVQQNPQSRIHRAQTRIQQLEYRLAETLRAQLSATRERFGNAVTHLEAVSPLSTLARGYSVTSAADGAVLKQVKQVKVGETLTTRLGDGVVISEVSAVTKTRKSRKKTSNP.

This sequence belongs to the XseA family. In terms of assembly, heterooligomer composed of large and small subunits.

The protein resides in the cytoplasm. The catalysed reaction is Exonucleolytic cleavage in either 5'- to 3'- or 3'- to 5'-direction to yield nucleoside 5'-phosphates.. In terms of biological role, bidirectionally degrades single-stranded DNA into large acid-insoluble oligonucleotides, which are then degraded further into small acid-soluble oligonucleotides. The chain is Exodeoxyribonuclease 7 large subunit from Escherichia coli O6:H1 (strain CFT073 / ATCC 700928 / UPEC).